The sequence spans 1064 residues: Phosphatidylinositol 4,5-bisphosphate 3-kinase catalytic subunit beta isoform (1064 aa).

Positions 20–109 (SDGAISVDFL…LPVLKLVTRS (90 aa)) constitute a PI3K-ABD domain. In terms of domain architecture, PI3K-RBD spans 188–279 (GGKLVVAVHF…RTLPHFILVE (92 aa)). Ser318 is subject to Phosphoserine. Positions 323–490 (NNNPFQITLV…NATALHITFP (168 aa)) constitute a C2 PI3K-type domain. A Nuclear localization signal (NLS) motif is present at residues 404-412 (KVKTKKSTK). Residues 518-695 (ANVSSRGGKK…GVILEAYCRG (178 aa)) enclose the PIK helical domain. In terms of domain architecture, PI3K/PI4K catalytic spans 766-1047 (YVEKCKYMDS…KFDEALRESW (282 aa)). The segment at 772 to 778 (YMDSKMK) is G-loop. The segment at 910-918 (GIGDRHSDN) is catalytic loop. The activation loop stretch occupies residues 929–955 (HIDFGHILGNFKSKFGIKRERVPFILT). Ser1064 carries the phosphoserine; by autocatalysis modification.

Belongs to the PI3/PI4-kinase family. As to quaternary structure, heterodimer of a catalytic subunit PIK3CB and a p85 regulatory subunit (PIK3R1, PIK3R2 or PIK3R3). Interaction with PIK3R2 is required for nuclear localization and nuclear export. Part of a complex with PIK3R1 and PTEN. Binding to PTEN may antagonize the lipid kinase activity under normal growth conditions. Part of a complex involved in autophagosome formation composed of PIK3C3 and PIK3R4. Interacts with BECN1, ATG14 and RAB5A. In terms of processing, phosphorylation at Ser-1064 down-regulates lipid kinase activity. Post-translationally, autophosphorylation at Ser-1064 negatively regulates the phosphatidylinositol-4,5-bisphosphate 3-kinase activity.

The protein localises to the cytoplasm. The protein resides in the nucleus. The enzyme catalyses a 1,2-diacyl-sn-glycero-3-phospho-(1D-myo-inositol-4,5-bisphosphate) + ATP = a 1,2-diacyl-sn-glycero-3-phospho-(1D-myo-inositol-3,4,5-trisphosphate) + ADP + H(+). The catalysed reaction is 1-octadecanoyl-2-(5Z,8Z,11Z,14Z)-eicosatetraenoyl-sn-glycero-3-phospho-1D-myo-inositol 4,5-bisphosphate + ATP = 1-octadecanoyl-2-(5Z,8Z,11Z,14Z-eicosatetraenoyl)-sn-glycero-3-phospho-(1D-myo-inositol 3,4,5-triphosphate) + ADP + H(+). It catalyses the reaction L-seryl-[protein] + ATP = O-phospho-L-seryl-[protein] + ADP + H(+). It participates in phospholipid metabolism; phosphatidylinositol phosphate biosynthesis. Functionally, phosphoinositide-3-kinase (PI3K) phosphorylates phosphatidylinositol (PI) derivatives at position 3 of the inositol ring to produce 3-phosphoinositides. Uses ATP and PtdIns(4,5)P2 (phosphatidylinositol 4,5-bisphosphate) to generate phosphatidylinositol 3,4,5-trisphosphate (PIP3). PIP3 plays a key role by recruiting PH domain-containing proteins to the membrane, including AKT1 and PDPK1, activating signaling cascades involved in cell growth, survival, proliferation, motility and morphology. Involved in the activation of AKT1 upon stimulation by G-protein coupled receptors (GPCRs) ligands such as CXCL12, sphingosine 1-phosphate, and lysophosphatidic acid. May also act downstream receptor tyrosine kinases. Required in different signaling pathways for stable platelet adhesion and aggregation. Plays a role in platelet activation signaling triggered by GPCRs, alpha-IIb/beta-3 integrins (ITGA2B/ ITGB3) and ITAM (immunoreceptor tyrosine-based activation motif)-bearing receptors such as GP6. Regulates the strength of adhesion of ITGA2B/ ITGB3 activated receptors necessary for the cellular transmission of contractile forces. Required for platelet aggregation induced by F2 (thrombin) and thromboxane A2 (TXA2). Has a role in cell survival. May have a role in cell migration. Involved in the early stage of autophagosome formation. Modulates the intracellular level of PtdIns3P (phosphatidylinositol 3-phosphate) and activates PIK3C3 kinase activity. May act as a scaffold, independently of its lipid kinase activity to positively regulate autophagy. May have a role in insulin signaling as scaffolding protein in which the lipid kinase activity is not required. May have a kinase-independent function in regulating cell proliferation and in clathrin-mediated endocytosis. Mediator of oncogenic signal in cell lines lacking PTEN. The lipid kinase activity is necessary for its role in oncogenic transformation. Required for the growth of ERBB2 and RAS driven tumors. Also has a protein kinase activity showing autophosphorylation. The chain is Phosphatidylinositol 4,5-bisphosphate 3-kinase catalytic subunit beta isoform (Pik3cb) from Mus musculus (Mouse).